Consider the following 207-residue polypeptide: Na(+)-translocating NADH-quinone reductase subunit D (207 aa).

Transmembrane regions (helical) follow at residues 20 to 40 (IALQ…LQTA), 41 to 61 (FVMA…ISMI), 69 to 89 (IRII…DQIL), 102 to 122 (VFVG…AFAM), 130 to 150 (FVDG…VAFL), and 177 to 197 (NGLF…IWAI).

The protein belongs to the NqrDE/RnfAE family. Composed of six subunits; NqrA, NqrB, NqrC, NqrD, NqrE and NqrF.

It is found in the cell inner membrane. It carries out the reaction a ubiquinone + n Na(+)(in) + NADH + H(+) = a ubiquinol + n Na(+)(out) + NAD(+). Functionally, NQR complex catalyzes the reduction of ubiquinone-1 to ubiquinol by two successive reactions, coupled with the transport of Na(+) ions from the cytoplasm to the periplasm. NqrA to NqrE are probably involved in the second step, the conversion of ubisemiquinone to ubiquinol. The chain is Na(+)-translocating NADH-quinone reductase subunit D from Haemophilus ducreyi (strain 35000HP / ATCC 700724).